Consider the following 390-residue polypeptide: Protein-glutamate methylesterase/protein-glutamine glutaminase 1 (390 aa).

One can recognise a Response regulatory domain in the interval 4-121 (KVLVVDDSGF…SRNPQKVKQL (118 aa)). Asp-55 carries the 4-aspartylphosphate modification. A compositionally biased stretch (low complexity) spans 132–186 (SNRRSSGIGSASAASPAPAAPAPSTLSSRAPAPSAAAPARAVPSRTVAPAAAPAA). Positions 132-201 (SNRRSSGIGS…PAHPTTTGTA (70 aa)) are disordered. The CheB-type methylesterase domain occupies 195–387 (PTTTGTAKRK…LDDIGRHLVE (193 aa)). Residues Ser-214, His-241, and Asp-334 contribute to the active site.

The protein belongs to the CheB family. In terms of processing, phosphorylated by CheA. Phosphorylation of the N-terminal regulatory domain activates the methylesterase activity.

The protein resides in the cytoplasm. The catalysed reaction is [protein]-L-glutamate 5-O-methyl ester + H2O = L-glutamyl-[protein] + methanol + H(+). It catalyses the reaction L-glutaminyl-[protein] + H2O = L-glutamyl-[protein] + NH4(+). Involved in chemotaxis. Part of a chemotaxis signal transduction system that modulates chemotaxis in response to various stimuli. Catalyzes the demethylation of specific methylglutamate residues introduced into the chemoreceptors (methyl-accepting chemotaxis proteins or MCP) by CheR. Also mediates the irreversible deamidation of specific glutamine residues to glutamic acid. This chain is Protein-glutamate methylesterase/protein-glutamine glutaminase 1, found in Pseudomonas syringae pv. tomato (strain ATCC BAA-871 / DC3000).